The sequence spans 131 residues: MRHYEIVFMVHPDQSEQVPGMIERYSAAITGAEGKIHRLEDWGRRQLAYPINKLHKAHYVLMNVEAPQEVIDELETTFRFNDAVIRSMVMRTKHAVTEASPMVKAKDERRERRDDFANETADDAEAGDSEE.

The disordered stretch occupies residues 98–131 (EASPMVKAKDERRERRDDFANETADDAEAGDSEE). The segment covering 104–116 (KAKDERRERRDDF) has biased composition (basic and acidic residues). The span at 120-131 (TADDAEAGDSEE) shows a compositional bias: acidic residues.

It belongs to the bacterial ribosomal protein bS6 family.

In terms of biological role, binds together with bS18 to 16S ribosomal RNA. The protein is Small ribosomal subunit protein bS6 of Cronobacter sakazakii (strain ATCC BAA-894) (Enterobacter sakazakii).